Here is a 177-residue protein sequence, read N- to C-terminus: B-phycoerythrin beta chain (177 aa).

(2R,3E)-phycoerythrobilin-binding residues include cysteine 50 and cysteine 61. Asparagine 72 bears the N4-methylasparagine mark. Positions 82 and 158 each coordinate (2R,3E)-phycoerythrobilin.

The protein belongs to the phycobiliprotein family. Heterotetramer of one alpha-1, one alpha-2, and two beta chains. Contains three covalently linked bilin chromophores.

The protein localises to the plastid. The protein resides in the chloroplast thylakoid membrane. Light-harvesting photosynthetic bile pigment-protein from the phycobiliprotein complex. This Guillardia theta (Cryptophyte) protein is B-phycoerythrin beta chain (cpeB).